The chain runs to 186 residues: Putative manganese efflux pump MntP (186 aa).

6 helical membrane-spanning segments follow: residues 1-21, 39-59, 61-81, 102-122, 134-156, and 165-185; these read MSFL…FAVS, LAVF…IGGS, VSSF…AFIG, YSVL…VGMS, VIII…YRLG, and ILGG…HMLW.

This sequence belongs to the MntP (TC 9.B.29) family.

It localises to the cell membrane. Probably functions as a manganese efflux pump. This is Putative manganese efflux pump MntP from Methanosarcina acetivorans (strain ATCC 35395 / DSM 2834 / JCM 12185 / C2A).